The sequence spans 329 residues: MQTLAQHLSSQGIQAPLAQLLTTLADTSKAISHAVRHGALAGVLGATEQENVQGETQKKLDVITNDMLKEALTADSTVRGLASEEEDHIVEVGQSGDFLVCFDPLDGSSNIDINSLVGTIFSVLPAPSGELSEQSFLQPGRQQVAAGYVLYGPSTMLALTTGQGVQLFTLNPETNEYLLTNEAMSISKDTSEFAINMSNQRFWEAPMQTYIADLLLGKIGPREKSFNMRWIAAMVGDVHRVLSRGGLFTYPTDNKNPEKPYKLRLMYEANPMSFLVEQAGGKASTGYETIMDILPSEIHQRVAVILGSANEVDACLEYHGQDYSEEPSL.

Mg(2+)-binding residues include glutamate 84, aspartate 103, leucine 105, and aspartate 106. Residues 106-109 (DGSS), asparagine 196, and lysine 262 contribute to the substrate site. Residue glutamate 268 participates in Mg(2+) binding.

This sequence belongs to the FBPase class 1 family. Homotetramer. The cofactor is Mg(2+).

The protein resides in the cytoplasm. The enzyme catalyses beta-D-fructose 1,6-bisphosphate + H2O = beta-D-fructose 6-phosphate + phosphate. It functions in the pathway carbohydrate biosynthesis; gluconeogenesis. This Shewanella loihica (strain ATCC BAA-1088 / PV-4) protein is Fructose-1,6-bisphosphatase class 1.